The following is a 317-amino-acid chain: tRNA dimethylallyltransferase (317 aa).

19–26 lines the ATP pocket; sequence GPTASGKS. 21–26 is a binding site for substrate; that stretch reads TASGKS. Positions 44 to 47 are interaction with substrate tRNA; that stretch reads DSMQ.

The protein belongs to the IPP transferase family. Monomer. The cofactor is Mg(2+).

The catalysed reaction is adenosine(37) in tRNA + dimethylallyl diphosphate = N(6)-dimethylallyladenosine(37) in tRNA + diphosphate. Its function is as follows. Catalyzes the transfer of a dimethylallyl group onto the adenine at position 37 in tRNAs that read codons beginning with uridine, leading to the formation of N6-(dimethylallyl)adenosine (i(6)A). In Methylorubrum extorquens (strain PA1) (Methylobacterium extorquens), this protein is tRNA dimethylallyltransferase.